Consider the following 272-residue polypeptide: Regulatory protein RecX (272 aa).

It belongs to the RecX family.

It is found in the cytoplasm. In terms of biological role, modulates RecA activity. In Staphylococcus aureus (strain Newman), this protein is Regulatory protein RecX.